The sequence spans 118 residues: Large ribosomal subunit protein uL24 (118 aa).

Positions 1 to 24 (MSEQPHKQRTRTKRASLHEKQDQV) are disordered.

This sequence belongs to the universal ribosomal protein uL24 family. In terms of assembly, part of the 50S ribosomal subunit.

In terms of biological role, one of two assembly initiator proteins, it binds directly to the 5'-end of the 23S rRNA, where it nucleates assembly of the 50S subunit. Located at the polypeptide exit tunnel on the outside of the subunit. The protein is Large ribosomal subunit protein uL24 of Halobacterium salinarum (strain ATCC 700922 / JCM 11081 / NRC-1) (Halobacterium halobium).